Consider the following 993-residue polypeptide: P3N-PIPO polyprotein (993 aa).

The region spanning 154 to 298 is the Peptidase S30 domain; sequence GVTPYSVQQL…ESTMLSTHHY (145 aa). Active-site for P1 proteinase activity residues include His-207, Asp-216, and Ser-249. The short motif at 349-352 is the Involved in interaction with stylet and aphid transmission element; the sequence is KITC. The Involved in virions binding and aphid transmission signature appears at 607 to 609; sequence PTK. The 123-residue stretch at 633-755 folds into the Peptidase C6 domain; that stretch reads MYIAKSGYCY…DSEMKHYRVG (123 aa). Catalysis depends on for helper component proteinase activity residues Cys-641 and His-714.

Belongs to the potyviridae P3N-PIPO polyprotein family. Interacts (via PIPO domain) with host PCaP1 protein; this interaction may help to anchor the movement complex to the plasma membrane from which the complex could move to the plasmodesmata. Post-translationally, potyviral RNA is expressed as two polyproteins which undergo post-translational proteolytic processing. Genome polyprotein is processed by NIa-pro, P1 and HC-pro proteinases resulting in the production of at least ten individual proteins. P3N-PIPO is cleaved by P1 and HC-pro proteinases resulting in the production of three individual proteins. The P1 proteinase and the HC-pro cleave only their respective C-termini autocatalytically.

The protein resides in the host cell junction. It localises to the host plasmodesma. It catalyses the reaction Hydrolyzes a Gly-|-Gly bond at its own C-terminus, commonly in the sequence -Tyr-Xaa-Val-Gly-|-Gly, in the processing of the potyviral polyprotein.. In terms of biological role, required for aphid transmission and also has proteolytic activity. Only cleaves a Gly-Gly dipeptide at its own C-terminus. Interacts with virions and aphid stylets. Acts as a suppressor of RNA-mediated gene silencing, also known as post-transcriptional gene silencing (PTGS), a mechanism of plant viral defense that limits the accumulation of viral RNAs. May have RNA-binding activity. Its function is as follows. Allows efficient cell to cell propagation, by bypassing the host cell wall barrier. Transports viral genome to neighboring plant cells directly through plasmosdesmata, without any budding. The sequence is that of P3N-PIPO polyprotein from Solanum betaceum (Tamarillo).